We begin with the raw amino-acid sequence, 293 residues long: Elongation factor Ts (293 aa).

The segment at 79-82 (TDFV) is involved in Mg(2+) ion dislocation from EF-Tu.

It belongs to the EF-Ts family.

It is found in the cytoplasm. Its function is as follows. Associates with the EF-Tu.GDP complex and induces the exchange of GDP to GTP. It remains bound to the aminoacyl-tRNA.EF-Tu.GTP complex up to the GTP hydrolysis stage on the ribosome. The polypeptide is Elongation factor Ts (Exiguobacterium sibiricum (strain DSM 17290 / CCUG 55495 / CIP 109462 / JCM 13490 / 255-15)).